The following is a 523-amino-acid chain: UvrABC system protein C (523 aa).

The 79-residue stretch at 15–93 (HLPGCYLFKD…IKKHWPRYNI (79 aa)) folds into the GIY-YIG domain. The UVR domain occupies 197-232 (RELIESMETEMKEMAAKQMFEQAMELRDEIAALEYL).

The protein belongs to the UvrC family. As to quaternary structure, interacts with UvrB in an incision complex.

The protein localises to the cytoplasm. Functionally, the UvrABC repair system catalyzes the recognition and processing of DNA lesions. UvrC both incises the 5' and 3' sides of the lesion. The N-terminal half is responsible for the 3' incision and the C-terminal half is responsible for the 5' incision. The polypeptide is UvrABC system protein C (Methanosarcina mazei (strain ATCC BAA-159 / DSM 3647 / Goe1 / Go1 / JCM 11833 / OCM 88) (Methanosarcina frisia)).